The following is a 121-amino-acid chain: Large ribosomal subunit protein bL19 (121 aa).

Belongs to the bacterial ribosomal protein bL19 family.

Functionally, this protein is located at the 30S-50S ribosomal subunit interface and may play a role in the structure and function of the aminoacyl-tRNA binding site. This chain is Large ribosomal subunit protein bL19 (rplS), found in Chlamydia pneumoniae (Chlamydophila pneumoniae).